Here is a 443-residue protein sequence, read N- to C-terminus: Clustered-asparagine-rich protein (443 aa).

Residues threonine 16–proline 106 enclose the RRM 1 domain. The tract at residues asparagine 253–methionine 279 is disordered. Low complexity predominate over residues asparagine 256 to asparagine 277. The region spanning serine 342 to glycine 435 is the RRM 2 domain.

The polypeptide is Clustered-asparagine-rich protein (Plasmodium falciparum).